Consider the following 187-residue polypeptide: MNLPPGFRFFPTDEELVVHFLHRKASLLPCHPDVIPDLDLYHYDPWDLPGKALGEGRQWYFYSRKTQERVTSNGYWGSMGMDEPIYTSSTHKKVGIKKYLTFYLGDSQTNWIMQEYSLPDSSSSSSRSSKRSSRASSSSHKPDYSKWVICRVYEQNCSEEEDDDGTELSCLDEVFLSLDDLDEVSLP.

Residues 3–155 enclose the NAC domain; that stretch reads LPPGFRFFPT…KWVICRVYEQ (153 aa). Residues 94 to 161 mediate DNA binding; sequence VGIKKYLTFY…VYEQNCSEEE (68 aa). The interval 118 to 142 is disordered; the sequence is LPDSSSSSSRSSKRSSRASSSSHKP.

In terms of tissue distribution, expressed in root xylem vessels. Expressed in stems, vascular tissue of cauline leaves and tracheary elements of sepals.

The protein localises to the nucleus. In terms of biological role, probable transcription factor that influences tracheary elements and xylem development by negatively regulating secondary cell wall fiber synthesis and programmed cell death. This Arabidopsis thaliana (Mouse-ear cress) protein is NAC domain-containing protein 104.